The following is a 248-amino-acid chain: Metallo-beta-lactamase type 2 (248 aa).

The signal sequence occupies residues Met1–Gly21. Zn(2+)-binding residues include His97, His99, Asp101, His160, and Cys179. Lys182 lines the substrate pocket. His221 lines the Zn(2+) pocket.

It belongs to the metallo-beta-lactamase superfamily. Class-B beta-lactamase family. As to quaternary structure, monomer. Requires Zn(2+) as cofactor.

The protein resides in the periplasm. The enzyme catalyses a beta-lactam + H2O = a substituted beta-amino acid. Functionally, confers resistance to the different beta-lactams antibiotics (penicillin, cephalosporin and carbapenem) via the hydrolysis of the beta-lactam ring. The polypeptide is Metallo-beta-lactamase type 2 (blaB7) (Elizabethkingia meningoseptica (Chryseobacterium meningosepticum)).